Consider the following 476-residue polypeptide: Serine--tRNA ligase (476 aa).

280-282 (TAE) lines the L-serine pocket. 311 to 313 (RAE) contributes to the ATP binding site. Position 334 (glutamate 334) interacts with L-serine. Position 401 to 404 (401 to 404 (EISS)) interacts with ATP. Serine 436 is an L-serine binding site.

The protein belongs to the class-II aminoacyl-tRNA synthetase family. Type-1 seryl-tRNA synthetase subfamily. Homodimer. The tRNA molecule binds across the dimer.

The protein resides in the cytoplasm. It carries out the reaction tRNA(Ser) + L-serine + ATP = L-seryl-tRNA(Ser) + AMP + diphosphate + H(+). The catalysed reaction is tRNA(Sec) + L-serine + ATP = L-seryl-tRNA(Sec) + AMP + diphosphate + H(+). Its pathway is aminoacyl-tRNA biosynthesis; selenocysteinyl-tRNA(Sec) biosynthesis; L-seryl-tRNA(Sec) from L-serine and tRNA(Sec): step 1/1. In terms of biological role, catalyzes the attachment of serine to tRNA(Ser). Is also able to aminoacylate tRNA(Sec) with serine, to form the misacylated tRNA L-seryl-tRNA(Sec), which will be further converted into selenocysteinyl-tRNA(Sec). The chain is Serine--tRNA ligase from Rhodopseudomonas palustris (strain HaA2).